The following is a 440-amino-acid chain: UDP-glycosyltransferase 87A1 (440 aa).

Residues Ser263, 312–314, 329–337, and 351–354 each bind UDP-alpha-D-glucose; these read CDQ, HCGYNSTLE, and FWDQ.

It belongs to the UDP-glycosyltransferase family.

This chain is UDP-glycosyltransferase 87A1 (UGT87A1), found in Arabidopsis thaliana (Mouse-ear cress).